The chain runs to 271 residues: Solute carrier family 66 member 2 (271 aa).

Helical transmembrane passes span glycine 7 to phenylalanine 27, phenylalanine 49 to phenylalanine 69, and histidine 72 to leucine 92. One can recognise a PQ-loop 1 domain in the interval histidine 14 to glutamine 80. The residue at position 110 (serine 110) is a Phosphoserine. Transmembrane regions (helical) follow at residues phenylalanine 143–leucine 163, alanine 168–proline 188, and valine 232–alanine 252. The PQ-loop 2 domain occupies cysteine 149–threonine 215.

Its subcellular location is the membrane. This is Solute carrier family 66 member 2 (Slc66a2) from Rattus norvegicus (Rat).